Reading from the N-terminus, the 388-residue chain is Amylovoran biosynthesis protein AmsL (388 aa).

Helical transmembrane passes span 24-44, 47-67, 97-117, 231-251, 297-317, and 359-379; these read VLLS…ISWF, LPQL…LGSL, FTVI…LGLF, FVIM…SPVI, FYWN…VWIW, and ISVS…NLFI.

This sequence belongs to the polysaccharide synthase family.

The protein localises to the cell membrane. Its pathway is glycan metabolism; exopolysaccharide biosynthesis. Involved in the biosynthesis of amylovoran which functions as a virulence factor. This Erwinia amylovora (Fire blight bacteria) protein is Amylovoran biosynthesis protein AmsL (amsL).